A 135-amino-acid chain; its full sequence is Large ribosomal subunit protein uL16c (135 aa).

Belongs to the universal ribosomal protein uL16 family. In terms of assembly, part of the 50S ribosomal subunit.

The protein resides in the plastid. Its subcellular location is the chloroplast. The protein is Large ribosomal subunit protein uL16c of Lactuca sativa (Garden lettuce).